Reading from the N-terminus, the 259-residue chain is Dihydroorotate dehydrogenase B (NAD(+)), electron transfer subunit (259 aa).

The FAD-binding FR-type domain occupies 2-102 (MQKQNMIVVN…LGPLGHGFPV (101 aa)). FAD contacts are provided by residues 53 to 56 (RPIS), 70 to 72 (LYR), and 77 to 78 (GT). Positions 221, 226, 229, and 246 each coordinate [2Fe-2S] cluster.

This sequence belongs to the PyrK family. As to quaternary structure, heterotetramer of 2 PyrK and 2 PyrD type B subunits. [2Fe-2S] cluster is required as a cofactor. FAD serves as cofactor.

Its pathway is pyrimidine metabolism; UMP biosynthesis via de novo pathway; orotate from (S)-dihydroorotate (NAD(+) route): step 1/1. Functionally, responsible for channeling the electrons from the oxidation of dihydroorotate from the FMN redox center in the PyrD type B subunit to the ultimate electron acceptor NAD(+). The sequence is that of Dihydroorotate dehydrogenase B (NAD(+)), electron transfer subunit from Bacillus cereus (strain ATCC 14579 / DSM 31 / CCUG 7414 / JCM 2152 / NBRC 15305 / NCIMB 9373 / NCTC 2599 / NRRL B-3711).